The following is a 382-amino-acid chain: Carbamoyl phosphate synthase small chain (382 aa).

The segment at 1 to 189 is CPSase; it reads MIKSALLVLE…GLPEAKKEDE (189 aa). Residues S47, G241, and G243 each contribute to the L-glutamine site. The 188-residue stretch at 193–380 folds into the Glutamine amidotransferase type-1 domain; it reads HVVAYDFGAK…IALIEQYRKT (188 aa). Catalysis depends on C269, which acts as the Nucleophile. L-glutamine contacts are provided by L270, Q273, N311, G313, and F314. Residues H353 and E355 contribute to the active site.

The protein belongs to the CarA family. As to quaternary structure, composed of two chains; the small (or glutamine) chain promotes the hydrolysis of glutamine to ammonia, which is used by the large (or ammonia) chain to synthesize carbamoyl phosphate. Tetramer of heterodimers (alpha,beta)4.

It carries out the reaction hydrogencarbonate + L-glutamine + 2 ATP + H2O = carbamoyl phosphate + L-glutamate + 2 ADP + phosphate + 2 H(+). The enzyme catalyses L-glutamine + H2O = L-glutamate + NH4(+). The protein operates within amino-acid biosynthesis; L-arginine biosynthesis; carbamoyl phosphate from bicarbonate: step 1/1. It functions in the pathway pyrimidine metabolism; UMP biosynthesis via de novo pathway; (S)-dihydroorotate from bicarbonate: step 1/3. Small subunit of the glutamine-dependent carbamoyl phosphate synthetase (CPSase). CPSase catalyzes the formation of carbamoyl phosphate from the ammonia moiety of glutamine, carbonate, and phosphate donated by ATP, constituting the first step of 2 biosynthetic pathways, one leading to arginine and/or urea and the other to pyrimidine nucleotides. The small subunit (glutamine amidotransferase) binds and cleaves glutamine to supply the large subunit with the substrate ammonia. The polypeptide is Carbamoyl phosphate synthase small chain (Escherichia coli O6:H1 (strain CFT073 / ATCC 700928 / UPEC)).